We begin with the raw amino-acid sequence, 293 residues long: Elongation factor Ts (293 aa).

Residues Thr80–Val83 are involved in Mg(2+) ion dislocation from EF-Tu.

The protein belongs to the EF-Ts family.

Its subcellular location is the cytoplasm. Its function is as follows. Associates with the EF-Tu.GDP complex and induces the exchange of GDP to GTP. It remains bound to the aminoacyl-tRNA.EF-Tu.GTP complex up to the GTP hydrolysis stage on the ribosome. This Paraburkholderia phytofirmans (strain DSM 17436 / LMG 22146 / PsJN) (Burkholderia phytofirmans) protein is Elongation factor Ts.